Here is a 393-residue protein sequence, read N- to C-terminus: 4-hydroxyphenylpyruvate dioxygenase (393 aa).

Position 2 is an N-acetylthreonine (Thr-2). VOC domains follow at residues 18–149 (HFHS…LVEK) and 180–338 (MIDH…IFTK). Lys-132 carries the N6-succinyllysine modification. A Fe cation-binding site is contributed by His-183. Phosphoserine is present on residues Ser-211, Ser-226, and Ser-250. Fe cation-binding residues include His-266 and Glu-349.

This sequence belongs to the 4HPPD family. Homodimer. Requires Fe cation as cofactor.

The protein resides in the cytoplasm. It is found in the endoplasmic reticulum membrane. The protein localises to the golgi apparatus membrane. It carries out the reaction 3-(4-hydroxyphenyl)pyruvate + O2 = homogentisate + CO2. It functions in the pathway amino-acid degradation; L-phenylalanine degradation; acetoacetate and fumarate from L-phenylalanine: step 3/6. Functionally, catalyzes the conversion of 4-hydroxyphenylpyruvic acid to homogentisic acid, one of the steps in tyrosine catabolism. This Homo sapiens (Human) protein is 4-hydroxyphenylpyruvate dioxygenase (HPD).